The following is a 920-amino-acid chain: Isoleucine--tRNA ligase (920 aa).

A 'HIGH' region motif is present at residues 58–68; that stretch reads PYANGHLHLGH. Glutamate 569 is a binding site for L-isoleucyl-5'-AMP. The short motif at 610–614 is the 'KMSKS' region element; the sequence is KMSKS. Residue lysine 613 participates in ATP binding. The Zn(2+) site is built by cysteine 895, cysteine 898, cysteine 910, and cysteine 913.

The protein belongs to the class-I aminoacyl-tRNA synthetase family. IleS type 1 subfamily. As to quaternary structure, monomer. It depends on Zn(2+) as a cofactor.

Its subcellular location is the cytoplasm. The catalysed reaction is tRNA(Ile) + L-isoleucine + ATP = L-isoleucyl-tRNA(Ile) + AMP + diphosphate. Catalyzes the attachment of isoleucine to tRNA(Ile). As IleRS can inadvertently accommodate and process structurally similar amino acids such as valine, to avoid such errors it has two additional distinct tRNA(Ile)-dependent editing activities. One activity is designated as 'pretransfer' editing and involves the hydrolysis of activated Val-AMP. The other activity is designated 'posttransfer' editing and involves deacylation of mischarged Val-tRNA(Ile). This Helicobacter pylori (strain J99 / ATCC 700824) (Campylobacter pylori J99) protein is Isoleucine--tRNA ligase.